A 734-amino-acid chain; its full sequence is Photosystem I P700 chlorophyll a apoprotein A2 (734 aa).

8 consecutive transmembrane segments (helical) span residues 46 to 69, 135 to 158, 175 to 199, 273 to 291, 330 to 353, 369 to 395, 417 to 439, and 517 to 535; these read IFAS…FHVA, LYTG…LHLQ, LNHH…HVAI, MAHH…GHMY, LHFQ…QHMY, AALY…IFFI, AIIS…LYVH, and FLVH…LILV. [4Fe-4S] cluster-binding residues include cysteine 559 and cysteine 568. Helical transmembrane passes span 575–596 and 643–665; these read AFYL…YWHW and LSVW…MFLI. Chlorophyll a-binding residues include histidine 654, methionine 662, and tyrosine 670. A phylloquinone-binding site is contributed by tryptophan 671. A helical membrane pass occupies residues 707–727; it reads LVGLAHFSVGYIFTYAAFLIA.

Belongs to the PsaA/PsaB family. In terms of assembly, the PsaA/B heterodimer binds the P700 chlorophyll special pair and subsequent electron acceptors. PSI consists of a core antenna complex that captures photons, and an electron transfer chain that converts photonic excitation into a charge separation. The eukaryotic PSI reaction center is composed of at least 11 subunits. P700 is a chlorophyll a/chlorophyll a' dimer, A0 is one or more chlorophyll a, A1 is one or both phylloquinones and FX is a shared 4Fe-4S iron-sulfur center. is required as a cofactor.

The protein resides in the plastid. The protein localises to the chloroplast thylakoid membrane. The catalysed reaction is reduced [plastocyanin] + hnu + oxidized [2Fe-2S]-[ferredoxin] = oxidized [plastocyanin] + reduced [2Fe-2S]-[ferredoxin]. Functionally, psaA and PsaB bind P700, the primary electron donor of photosystem I (PSI), as well as the electron acceptors A0, A1 and FX. PSI is a plastocyanin-ferredoxin oxidoreductase, converting photonic excitation into a charge separation, which transfers an electron from the donor P700 chlorophyll pair to the spectroscopically characterized acceptors A0, A1, FX, FA and FB in turn. Oxidized P700 is reduced on the lumenal side of the thylakoid membrane by plastocyanin. In Lactuca sativa (Garden lettuce), this protein is Photosystem I P700 chlorophyll a apoprotein A2.